We begin with the raw amino-acid sequence, 142 residues long: Large ribosomal subunit protein uL11 (142 aa).

This sequence belongs to the universal ribosomal protein uL11 family. As to quaternary structure, part of the ribosomal stalk of the 50S ribosomal subunit. Interacts with L10 and the large rRNA to form the base of the stalk. L10 forms an elongated spine to which L12 dimers bind in a sequential fashion forming a multimeric L10(L12)X complex. One or more lysine residues are methylated.

Functionally, forms part of the ribosomal stalk which helps the ribosome interact with GTP-bound translation factors. In Tolumonas auensis (strain DSM 9187 / NBRC 110442 / TA 4), this protein is Large ribosomal subunit protein uL11.